The primary structure comprises 450 residues: Phosphoglucosamine mutase (450 aa).

The Phosphoserine intermediate role is filled by Ser97. 4 residues coordinate Mg(2+): Ser97, Asp236, Asp238, and Asp240. Ser97 bears the Phosphoserine mark.

It belongs to the phosphohexose mutase family. It depends on Mg(2+) as a cofactor. Post-translationally, activated by phosphorylation.

The enzyme catalyses alpha-D-glucosamine 1-phosphate = D-glucosamine 6-phosphate. Functionally, catalyzes the conversion of glucosamine-6-phosphate to glucosamine-1-phosphate. In Prochlorococcus marinus (strain MIT 9215), this protein is Phosphoglucosamine mutase.